The following is a 336-amino-acid chain: 4-hydroxythreonine-4-phosphate dehydrogenase (336 aa).

Substrate-binding residues include His-135 and Thr-136. Positions 165, 210, and 265 each coordinate a divalent metal cation. Substrate-binding residues include Lys-273, Asn-282, and Arg-291.

The protein belongs to the PdxA family. As to quaternary structure, homodimer. Zn(2+) is required as a cofactor. Mg(2+) serves as cofactor. The cofactor is Co(2+).

The protein localises to the cytoplasm. The enzyme catalyses 4-(phosphooxy)-L-threonine + NAD(+) = 3-amino-2-oxopropyl phosphate + CO2 + NADH. It participates in cofactor biosynthesis; pyridoxine 5'-phosphate biosynthesis; pyridoxine 5'-phosphate from D-erythrose 4-phosphate: step 4/5. Its function is as follows. Catalyzes the NAD(P)-dependent oxidation of 4-(phosphooxy)-L-threonine (HTP) into 2-amino-3-oxo-4-(phosphooxy)butyric acid which spontaneously decarboxylates to form 3-amino-2-oxopropyl phosphate (AHAP). The polypeptide is 4-hydroxythreonine-4-phosphate dehydrogenase (Marinobacter nauticus (strain ATCC 700491 / DSM 11845 / VT8) (Marinobacter aquaeolei)).